The chain runs to 366 residues: Peptide chain release factor 1 (366 aa).

An N5-methylglutamine modification is found at Q239.

It belongs to the prokaryotic/mitochondrial release factor family. Post-translationally, methylated by PrmC. Methylation increases the termination efficiency of RF1.

The protein resides in the cytoplasm. Peptide chain release factor 1 directs the termination of translation in response to the peptide chain termination codons UAG and UAA. This Albidiferax ferrireducens (strain ATCC BAA-621 / DSM 15236 / T118) (Rhodoferax ferrireducens) protein is Peptide chain release factor 1.